Here is a 496-residue protein sequence, read N- to C-terminus: Cytochrome P450 71AV8 (496 aa).

Residues 3–23 (ISIPTTLGLAVIIFIIFKLLT) traverse the membrane as a helical segment. Cysteine 432 contributes to the heme binding site.

This sequence belongs to the cytochrome P450 family. Heme serves as cofactor.

It localises to the membrane. Its function is as follows. Valencene oxidase, which preferentially hydroylates the C2 position of (+)-valencene in the trans-orientation, producing trans-nootkatol that can be further oxidized to (+)-nootkatone. Can also catalyze the three-step conversion of germacrene A to germacra-1(10),4,11(13)-trien-12-oic acid and the partial conversion of the non-natural substrate amorpha-4,11-diene into artemisinic alcohol and artemisinic aldehyde. The polypeptide is Cytochrome P450 71AV8 (CYP71AV8) (Cichorium intybus (Chicory)).